The chain runs to 562 residues: NAD-dependent malic enzyme (562 aa).

Tyr-101 serves as the catalytic Proton donor. Arg-154 is a binding site for NAD(+). The Proton acceptor role is filled by Lys-172. Glu-243, Asp-244, and Asp-267 together coordinate a divalent metal cation. Asp-267 and Asn-415 together coordinate NAD(+).

The protein belongs to the malic enzymes family. As to quaternary structure, homotetramer. The cofactor is Mg(2+). It depends on Mn(2+) as a cofactor.

The enzyme catalyses (S)-malate + NAD(+) = pyruvate + CO2 + NADH. It catalyses the reaction oxaloacetate + H(+) = pyruvate + CO2. In Shewanella frigidimarina (strain NCIMB 400), this protein is NAD-dependent malic enzyme.